A 535-amino-acid polypeptide reads, in one-letter code: Alpha-1,3-mannosyl-glycoprotein 4-beta-N-acetylglucosaminyltransferase A (535 aa).

Over 1 to 4 (MRLR) the chain is Cytoplasmic. Residues 5 to 27 (NGTVATALAFITSFLTLSWYTTW) form a helical; Signal-anchor for type II membrane protein membrane-spanning segment. Residues 28-63 (QNGKEKLIAYQREFLALKERLRIAEHRISQRSSELN) are a coiled coil. At 28–535 (QNGKEKLIAY…NEIHIKKATN (508 aa)) the chain is on the lumenal side. Asn77 and Asn458 each carry an N-linked (GlcNAc...) asparagine glycan. At Ser474 the chain carries Phosphoserine.

It belongs to the glycosyltransferase 54 family. It depends on a divalent metal cation as a cofactor. N-glycosylated.

Its subcellular location is the golgi apparatus membrane. The protein localises to the secreted. The enzyme catalyses N(4)-{beta-D-GlcNAc-(1-&gt;2)-alpha-D-Man-(1-&gt;3)-[beta-D-GlcNAc-(1-&gt;2)-alpha-D-Man-(1-&gt;6)]-beta-D-Man-(1-&gt;4)-beta-D-GlcNAc-(1-&gt;4)-beta-D-GlcNAc}-L-asparaginyl-[protein] + UDP-N-acetyl-alpha-D-glucosamine = N(4)-{beta-D-GlcNAc-(1-&gt;2)-[beta-D-GlcNAc-(1-&gt;4)]-alpha-D-Man-(1-&gt;3)-[beta-D-GlcNAc-(1-&gt;2)-alpha-D-Man-(1-&gt;6)]-beta-D-Man-(1-&gt;4)-beta-D-GlcNAc-(1-&gt;4)-beta-D-GlcNAc}-L-asparaginyl-[protein] + UDP + H(+). It carries out the reaction an N(4)-{beta-D-GlcNAc-(1-&gt;2)-alpha-D-Man-(1-&gt;3)-[alpha-D-Man-(1-&gt;6)]-beta-D-Man-(1-&gt;4)-beta-D-GlcNAc-(1-&gt;4)-beta-D-GlcNAc}-L-asparaginyl-[protein] + UDP-N-acetyl-alpha-D-glucosamine = an N(4)-{beta-D-GlcNAc-(1-&gt;2)-[beta-D-GlcNAc-(1-&gt;4)]-alpha-D-Man-(1-&gt;3)-[alpha-D-Man-(1-&gt;6)]-beta-D-Man-(1-&gt;4)-beta-D-GlcNAc-(1-&gt;4)-beta-D-GlcNAc}-L-asparaginyl-[protein] + UDP + H(+). It catalyses the reaction an N(4)-{beta-D-GlcNAc-(1-&gt;2)-alpha-D-Man-(1-&gt;3)-[beta-D-GlcNAc-(1-&gt;2)-[beta-D-GlcNAc-(1-&gt;6)]-alpha-D-Man-(1-&gt;6)]-beta-D-Man-(1-&gt;4)-beta-D-GlcNAc-(1-&gt;4)-beta-D-GlcNAc}-L-asparaginyl-[protein] + UDP-N-acetyl-alpha-D-glucosamine = an N(4)-{beta-D-GlcNAc-(1-&gt;2)-[beta-D-GlcNAc-(1-&gt;4)]-alpha-D-Man-(1-&gt;3)-[beta-D-GlcNAc-(1-&gt;2)-[beta-D-GlcNAc-(1-&gt;6)]-alpha-D-Man-(1-&gt;6)]-beta-D-Man-(1-&gt;4)-beta-D-GlcNAc-(1-&gt;4)-beta-D-GlcNAc}-L-asparaginyl-[protein] + UDP + H(+). The catalysed reaction is an N(4)-{beta-D-GlcNAc-(1-&gt;2)-alpha-D-Man-(1-&gt;3)-[beta-D-GlcNAc-(1-&gt;2)-alpha-D-Man-(1-&gt;6)]-beta-D-Man-(1-&gt;4)-beta-D-GlcNAc-(1-&gt;4)-[alpha-L-Fuc-(1-&gt;6)]-beta-D-GlcNAc}-L-asparaginyl-[protein] + UDP-N-acetyl-alpha-D-glucosamine = N(4)-{beta-D-GlcNAc-(1-&gt;2)-[beta-D-GlcNAc-(1-&gt;4)]-alpha-D-Man-(1-&gt;3)-[beta-D-GlcNAc-(1-&gt;2)-alpha-D-Man-(1-&gt;6)]-beta-D-Man-(1-&gt;4)-beta-D-GlcNAc-(1-&gt;4)-[alpha-L-Fuc-(1-&gt;6)]-beta-D-GlcNAc}-asparaginyl-[protein] + UDP + H(+). The enzyme catalyses an N(4)-{beta-D-GlcNAc-(1-&gt;2)-alpha-D-Man-(1-&gt;3)-[beta-D-Gal-(1-&gt;4)-beta-D-GlcNAc-(1-&gt;2)-alpha-D-Man-(1-&gt;6)]-beta-D-Man-(1-&gt;4)-beta-D-GlcNAc-(1-&gt;4)-beta-D-GlcNAc}-L-asparaginyl-[protein] + UDP-N-acetyl-alpha-D-glucosamine = an N(4)-{beta-D-GlcNAc-(1-&gt;2)-[beta-D-GlcNAc-(1-&gt;4)]-alpha-D-Man-(1-&gt;3)-[beta-D-Gal-(1-&gt;4)-beta-D-GlcNAc-(1-&gt;2)-alpha-D-Man-(1-&gt;6)]-beta-D-Man-(1-&gt;4)-beta-D-GlcNAc-(1-&gt;4)-beta-D-GlcNAc}-L-asparaginyl-[protein] + UDP + H(+). It carries out the reaction N(4)-{beta-D-GlcNAc-(1-&gt;2)-alpha-D-Man-(1-&gt;3)-[alpha-D-Man-(1-&gt;3)-{alpha-D-Man-(1-&gt;6)}-alpha-D-Man-(1-&gt;6)]-beta-D-Man-(1-&gt;4)-beta-D-GlcNAc-(1-&gt;4)-beta-D-GlcNAc}-asparaginyl-[protein] + UDP-N-acetyl-alpha-D-glucosamine = N(4)-{beta-D-GlcNAc-(1-&gt;2)-[beta-D-GlcNAc-(1-&gt;4)]-alpha-D-Man-(1-&gt;3)-[alpha-D-Man-(1-&gt;3)-{alpha-D-Man-(1-&gt;6)}-alpha-D-Man-(1-&gt;6)]-beta-D-Man-(1-&gt;4)-beta-D-GlcNAc-(1-&gt;4)-beta-D-GlcNAc}-asparaginyl-[protein] + UDP + H(+). It catalyses the reaction N(4)-{beta-D-GlcNAc-(1-&gt;2)-alpha-D-Man-(1-&gt;3)-beta-D-Man-(1-&gt;4)-beta-D-GlcNAc-(1-&gt;4)-beta-D-GlcNAc}-asparaginyl-[protein] + UDP-N-acetyl-alpha-D-glucosamine = N(4)-{beta-D-GlcNAc-(1-&gt;2)-[beta-D-GlcNAc-(1-&gt;4)]-alpha-D-Man-(1-&gt;3)-beta-D-Man-(1-&gt;4)-beta-D-GlcNAc-(1-&gt;4)-beta-D-GlcNAc}-asparaginyl-[protein] + UDP + H(+). The protein operates within protein modification; protein glycosylation. Its activity is regulated as follows. Inhibited by UDP. Glycosyltransferase that catalyze the transfer of GlcNAc from UDP-GlcNAc to the GlcNAcbeta1-2Manalpha1-3 arm of the core structure of N-linked glycans through a beta1-4 linkage and participates in the production of tri- and tetra-antennary N-linked sugar chains. Involved in glucose transport by mediating SLC2A2/GLUT2 glycosylation, thereby controlling cell-surface expression of SLC2A2 in pancreatic beta cells. The chain is Alpha-1,3-mannosyl-glycoprotein 4-beta-N-acetylglucosaminyltransferase A from Pongo abelii (Sumatran orangutan).